We begin with the raw amino-acid sequence, 179 residues long: Large ribosomal subunit protein uL5 (179 aa).

It belongs to the universal ribosomal protein uL5 family. In terms of assembly, part of the 50S ribosomal subunit; part of the 5S rRNA/L5/L18/L25 subcomplex. Contacts the 5S rRNA and the P site tRNA. Forms a bridge to the 30S subunit in the 70S ribosome.

In terms of biological role, this is one of the proteins that bind and probably mediate the attachment of the 5S RNA into the large ribosomal subunit, where it forms part of the central protuberance. In the 70S ribosome it contacts protein S13 of the 30S subunit (bridge B1b), connecting the 2 subunits; this bridge is implicated in subunit movement. Contacts the P site tRNA; the 5S rRNA and some of its associated proteins might help stabilize positioning of ribosome-bound tRNAs. In Neisseria gonorrhoeae (strain ATCC 700825 / FA 1090), this protein is Large ribosomal subunit protein uL5.